Reading from the N-terminus, the 113-residue chain is Large ribosomal subunit protein uL22 (113 aa).

Belongs to the universal ribosomal protein uL22 family. As to quaternary structure, part of the 50S ribosomal subunit.

In terms of biological role, this protein binds specifically to 23S rRNA; its binding is stimulated by other ribosomal proteins, e.g. L4, L17, and L20. It is important during the early stages of 50S assembly. It makes multiple contacts with different domains of the 23S rRNA in the assembled 50S subunit and ribosome. Its function is as follows. The globular domain of the protein is located near the polypeptide exit tunnel on the outside of the subunit, while an extended beta-hairpin is found that lines the wall of the exit tunnel in the center of the 70S ribosome. The protein is Large ribosomal subunit protein uL22 of Bacillus pumilus (strain SAFR-032).